The chain runs to 396 residues: Phosphoglycerate kinase (396 aa).

Residues 21-23 (DLN), arginine 36, 59-62 (HFGR), arginine 118, and arginine 151 contribute to the substrate site. ATP is bound by residues lysine 201, glutamate 323, and 353–356 (GGDT).

The protein belongs to the phosphoglycerate kinase family. In terms of assembly, monomer.

Its subcellular location is the cytoplasm. The enzyme catalyses (2R)-3-phosphoglycerate + ATP = (2R)-3-phospho-glyceroyl phosphate + ADP. Its pathway is carbohydrate degradation; glycolysis; pyruvate from D-glyceraldehyde 3-phosphate: step 2/5. This Brucella melitensis biotype 1 (strain ATCC 23456 / CCUG 17765 / NCTC 10094 / 16M) protein is Phosphoglycerate kinase.